Reading from the N-terminus, the 2531-residue chain is Neurogenic locus notch homolog protein 1 (2531 aa).

A signal peptide spans 1-18; sequence MPRLLAPLLCLTLLPALA. The Extracellular portion of the chain corresponds to 19 to 1725; it reads ARGLRCSQPS…VEPPLPSQLH (1707 aa). EGF-like domains are found at residues 20–58, 59–99, 102–139, and 140–176; these read RGLR…QRCQ, DPSP…PLCL, LANA…KSCQ, and QADP…PTCR. 33 cysteine pairs are disulfide-bonded: Cys24–Cys37, Cys31–Cys46, Cys48–Cys57, Cys63–Cys74, Cys68–Cys87, Cys89–Cys98, Cys106–Cys117, Cys111–Cys127, Cys129–Cys138, Cys144–Cys155, Cys149–Cys164, Cys166–Cys175, Cys182–Cys195, Cys189–Cys204, Cys206–Cys215, Cys222–Cys233, Cys227–Cys243, Cys245–Cys254, Cys261–Cys272, Cys266–Cys281, Cys283–Cys292, Cys299–Cys312, Cys306–Cys321, Cys323–Cys332, Cys339–Cys350, Cys344–Cys359, Cys361–Cys370, Cys376–Cys387, Cys381–Cys398, Cys400–Cys409, Cys416–Cys429, Cys423–Cys438, and Cys440–Cys449. Asn41 carries N-linked (GlcNAc...) asparagine glycosylation. Ser65 carries O-linked (Glc...) serine glycosylation. Thr73 carries O-linked (Fuc...) threonine glycosylation. O-linked (Fuc...) threonine glycosylation is present at Thr116. The O-linked (Glc...) serine glycan is linked to Ser146. One can recognise an EGF-like 5; calcium-binding domain in the interval 178 to 216; sequence DVNECSQNPGLCRHGGTCHNEIGSYRCACRATHTGPHCE. Thr194 carries O-linked (Fuc...) threonine glycosylation. The EGF-like 6 domain maps to 218–255; it reads PYVPCSPSPCQNGGTCRPTGDTTHECACLPGFAGQNCE. O-linked (Fuc...) threonine; alternate glycosylation is present at Thr232. An O-linked (GalNAc...) threonine; alternate glycan is attached at Thr232. The EGF-like 7; calcium-binding domain occupies 257-293; it reads NVDDCPGNNCKNGGACVDGVNTYNCRCPPEWTGQYCT. An EGF-like 8; calcium-binding domain is found at 295 to 333; it reads DVDECQLMPNACQNGGTCHNSHGGYNCVCVNGWTGEDCS. Thr311 carries an O-linked (Fuc...) threonine glycan. Residues 335–371 enclose the EGF-like 9; calcium-binding domain; sequence NIDDCASAACFQGATCHDRVASFYCECPHGRTGLLCH. O-linked (Glc...) serine glycosylation occurs at Ser341. Thr349 carries O-linked (Fuc...) threonine glycosylation. The 39-residue stretch at 372-410 folds into the EGF-like 10 domain; the sequence is LNDACISNPCNEGSNCDTNPVNGKAICTCPSGYTGPACS. An O-linked (Glc...) serine glycan is attached at Ser378. The region spanning 412–450 is the EGF-like 11; calcium-binding domain; it reads DVDECALGANPCEHAGKCLNTLGSFECQCLQGYTGPRCE. The interval 420 to 421 is interaction with DLL4; it reads AN. Positions 432 and 435 each coordinate Ca(2+). O-linked (Glc...) serine glycosylation is present at Ser435. Residues 448–452 are interaction with DLL4; sequence RCEID. Residues Asp452, Val453, and Glu455 each coordinate Ca(2+). Residues 452 to 488 form the EGF-like 12; calcium-binding domain; the sequence is DVNECISNPCQNDATCLDQIGEFQCICMPGYEGVYCE. Cystine bridges form between Cys456–Cys467, Cys461–Cys476, and Cys478–Cys487. O-linked (Glc...) serine glycosylation occurs at Ser458. Residue Thr466 is glycosylated (O-linked (Fuc...) threonine). Ca(2+)-binding residues include Asp469 and Gln470. Ca(2+) contacts are provided by Asn490, Thr491, and Glu493. Residues 490-526 form the EGF-like 13; calcium-binding domain; the sequence is NTDECASSPCLHNGRCVDKINEFLCQCPKGFSGHLCQ. 75 disulfides stabilise this stretch: Cys494/Cys505, Cys499/Cys514, Cys516/Cys525, Cys532/Cys543, Cys537/Cys552, Cys554/Cys563, Cys570/Cys580, Cys575/Cys589, Cys591/Cys600, Cys607/Cys618, Cys612/Cys627, Cys629/Cys638, Cys645/Cys655, Cys650/Cys664, Cys666/Cys675, Cys682/Cys693, Cys687/Cys702, Cys704/Cys713, Cys720/Cys730, Cys725/Cys739, Cys741/Cys750, Cys757/Cys768, Cys762/Cys777, Cys779/Cys788, Cys795/Cys806, Cys800/Cys815, Cys817/Cys826, Cys833/Cys844, Cys838/Cys855, Cys857/Cys866, Cys873/Cys884, Cys878/Cys893, Cys895/Cys904, Cys911/Cys922, Cys916/Cys931, Cys933/Cys942, Cys949/Cys960, Cys954/Cys969, Cys971/Cys980, Cys987/Cys998, Cys992/Cys1007, Cys1009/Cys1018, Cys1025/Cys1036, Cys1030/Cys1045, Cys1047/Cys1056, Cys1063/Cys1074, Cys1068/Cys1083, Cys1085/Cys1094, Cys1101/Cys1122, Cys1116/Cys1131, Cys1133/Cys1142, Cys1149/Cys1160, Cys1154/Cys1169, Cys1171/Cys1180, Cys1187/Cys1198, Cys1192/Cys1207, Cys1209/Cys1218, Cys1225/Cys1244, Cys1238/Cys1253, Cys1255/Cys1264, Cys1271/Cys1284, Cys1276/Cys1293, Cys1295/Cys1304, Cys1311/Cys1322, Cys1316/Cys1334, Cys1336/Cys1345, Cys1352/Cys1363, Cys1357/Cys1372, Cys1374/Cys1383, Cys1391/Cys1403, Cys1397/Cys1414, Cys1416/Cys1425, Cys1449/Cys1472, Cys1454/Cys1467, and Cys1463/Cys1479. Ser496 carries O-linked (Glc...) serine glycosylation. Ca(2+)-binding residues include Asp507 and Lys508. An EGF-like 14; calcium-binding domain is found at 528–564; that stretch reads DVDECASTPCKNGAKCLDGPNTYTCVCTEGYTGTHCE. The O-linked (Glc...) serine glycan is linked to Ser534. One can recognise an EGF-like 15; calcium-binding domain in the interval 566–601; that stretch reads DIDECDPDPCHYGLCKDGVATFTCLCQPGYTGHHCE. The EGF-like 16; calcium-binding domain occupies 603 to 639; sequence NINECHSQPCRHGGTCQDRDNYYLCLCLKGTTGPNCE. A glycan (O-linked (Glc...) serine) is linked at Ser609. Thr617 is a glycosylation site (O-linked (Fuc...) threonine). One can recognise an EGF-like 17; calcium-binding domain in the interval 641 to 676; it reads NLDDCASNPCDSGTCLDKIDGYECACEPGYTGSMCN. Ser647 carries O-linked (Glc...) serine glycosylation. Residues 678–714 form the EGF-like 18; calcium-binding domain; the sequence is NIDECAGSPCHNGGTCEDGIAGFTCRCPEGYHDPTCL. The O-linked (Fuc...) threonine glycan is linked to Thr692. Residues 716 to 751 enclose the EGF-like 19; calcium-binding domain; the sequence is EVNECNSNPCIHGACRDGLNGYKCDCAPGWSGTNCD. Ser722 carries O-linked (Glc...) serine glycosylation. The 37-residue stretch at 753 to 789 folds into the EGF-like 20; calcium-binding domain; the sequence is NNNECESNPCVNGGTCKDMTSGYVCTCREGFSGPNCQ. An O-linked (Glc...) serine glycan is attached at Ser759. O-linked (Fuc...) threonine glycosylation is present at Thr767. A glycan (O-linked (GlcNAc) serine) is linked at Ser784. One can recognise an EGF-like 21; calcium-binding domain in the interval 791-827; sequence NINECASNPCLNQGTCIDDVAGYKCNCPLPYTGATCE. The O-linked (Glc...) serine glycan is linked to Ser797. O-linked (Fuc...) threonine glycosylation occurs at Thr805. Residues 829–867 form the EGF-like 22 domain; sequence VLAPCATSPCKNSGVCKESEDYESFSCVCPTGWQGQTCE. The EGF-like 23; calcium-binding domain occupies 869–905; the sequence is DINECVKSPCRHGASCQNTNGSYRCLCQAGYTGRNCE. A glycan (N-linked (GlcNAc...) asparagine) is linked at Asn888. O-linked (GlcNAc) threonine glycosylation is present at Thr900. Positions 907-943 constitute an EGF-like 24 domain; it reads DIDDCRPNPCHNGGSCTDGVNAAFCDCLPGFQGAFCE. A glycan (O-linked (Fuc) serine) is linked at Ser921. The EGF-like 25; calcium-binding domain occupies 945–981; that stretch reads DINECASNPCQNGANCTDCVDSYTCTCPTGFNGIHCE. An O-linked (Glc...) serine glycan is attached at Ser951. Asn959 carries N-linked (GlcNAc...) asparagine glycosylation. Positions 983–1019 constitute an EGF-like 26 domain; that stretch reads NTPDCTESSCFNGGTCVDGINSFTCLCPPGFTGSYCQ. An O-linked (Fuc...) threonine glycan is attached at Thr997. An EGF-like 27; calcium-binding domain is found at 1021-1057; that stretch reads DVNECDSRPCLHGGTCQDSYGTYKCTCPQGYTGLNCQ. The O-linked (Glc...) serine glycan is linked to Ser1027. O-linked (Fuc...) threonine glycosylation is present at Thr1035. 2 consecutive EGF-like domains span residues 1059-1095 and 1097-1143; these read LVRW…FNCD and LSVS…SYCE. O-linked (Glc...) serine glycosylation is present at Ser1065. The 37-residue stretch at 1145 to 1181 folds into the EGF-like 30; calcium-binding domain; that stretch reads EVDECSPNPCQNGATCTDYLGGFSCKCVAGYHGSNCS. O-linked (Fuc...) threonine glycosylation occurs at Thr1159. The N-linked (GlcNAc...) asparagine glycan is linked to Asn1179. An EGF-like 31; calcium-binding domain is found at 1183 to 1219; that stretch reads EINECLSQPCQNGGTCIDLTNTYKCSCPRGTQGVHCE. An O-linked (Glc...) serine glycan is attached at Ser1189. Thr1197 carries an O-linked (Fuc...) threonine glycan. Residues 1221–1265 form the EGF-like 32; calcium-binding domain; it reads NVDDCHPPLDPASRSPKCFNNGTCVDQVGGYTCTCPPGFVGERCE. N-linked (GlcNAc...) asparagine glycosylation is present at Asn1241. 4 consecutive EGF-like domains span residues 1267–1305, 1307–1346, 1348–1384, and 1387–1426; these read DVNE…RRCE, VING…ATCE, DART…PECQ, and ASSP…LLCH. Ser1273 carries O-linked (Glc...) serine glycosylation. Thr1362 carries an O-linked (Fuc...) threonine glycan. O-linked (GlcNAc...) threonine glycosylation occurs at Thr1379. The O-linked (Fuc...) threonine; alternate glycan is linked to Thr1402. Residue Thr1402 is glycosylated (O-linked (GalNAc...) threonine; alternate). LNR repeat units follow at residues 1449-1489, 1490-1531, and 1532-1571; these read CELP…PWKN, CTQS…CNPL, and YDQY…RLAA. Ca(2+)-binding residues include Asp1457, Asn1460, Asp1475, and Asp1478. N-linked (GlcNAc...) asparagine glycosylation is present at Asn1489. 5 disulfide bridges follow: Cys1490–Cys1514, Cys1496–Cys1509, Cys1505–Cys1521, Cys1536–Cys1549, and Cys1545–Cys1561. N-linked (GlcNAc...) asparagine glycosylation is present at Asn1587. Residue Thr1715 is glycosylated (O-linked (GalNAc...) threonine). The interval 1718–1750 is interaction with PSEN1; it reads PPLPSQLHLMYVAAAAFVLLFFVGCGVLLSRKR. The chain crosses the membrane as a helical span at residues 1726–1746; that stretch reads LMYVAAAAFVLLFFVGCGVLL. The Cytoplasmic segment spans residues 1747 to 2531; it reads SRKRRRQHGQ…QITHIPEAFK (785 aa). Residue Lys1749 forms a Glycyl lysine isopeptide (Lys-Gly) (interchain with G-Cter in ubiquitin) linkage. Positions 1770 to 1798 are disordered; that stretch reads KKKRREPLGEDSVGLKPLKNASDGALMDD. Residue Thr1851 is modified to Phosphothreonine. 5 ANK repeats span residues 1917 to 1946, 1950 to 1980, 1984 to 2013, 2017 to 2046, and 2050 to 2079; these read TGET…DANI, MGRT…DLDA, DGTT…DVNA, LGKS…NKDM, and KEET…NRDI. Positions 1937–1945 are HIF1AN-binding; sequence LLEASADAN. The residue at position 1945 (Asn1945) is a (3S)-3-hydroxyasparagine; by HIF1AN. The tract at residues 2004 to 2012 is HIF1AN-binding; that stretch reads LINSHADVN. Residue Asn2012 is modified to (3S)-3-hydroxyasparagine; by HIF1AN. Disordered stretches follow at residues 2141 to 2185, 2382 to 2428, and 2440 to 2531; these read SATQ…DSSS, QPQN…SLPV, and PTSL…EAFK. A compositionally biased stretch (low complexity) spans 2382 to 2395; the sequence is QPQNLQPPSQPHLS. The segment covering 2440 to 2478 has biased composition (polar residues); it reads PTSLPSSMVPPMTTTQFLTPPSQHSYSSSPVDNTPSHQL. Low complexity predominate over residues 2488 to 2503; that stretch reads PSPESPDQWSSSSPHS. Positions 2504-2524 are enriched in polar residues; that stretch reads NISDWSEGISSPPTSMPSQIT.

This sequence belongs to the NOTCH family. Heterodimer of a C-terminal fragment N(TM) and an N-terminal fragment N(EC) which are probably linked by disulfide bonds. Interacts with DNER, DTX1, DTX2 and RBPJ/RBPSUH. Also interacts with MAML1, MAML2 and MAML3 which act as transcriptional coactivators for NOTCH1. Notch 1 intracellular domain interacts with SNW1; the interaction involves multimerized NOTCH1 NICD and is implicated in a formation of an intermediate preactivation complex which associates with DNA-bound CBF-1/RBPJ. The activated membrane-bound form interacts with AAK1 which promotes NOTCH1 stabilization. Forms a trimeric complex with FBXW7 and SGK1. Interacts with HIF1AN. HIF1AN negatively regulates the function of notch intracellular domain (NICD), accelerating myogenic differentiation. Interacts (via NICD) with SNAI1 (via zinc fingers); the interaction induces SNAI1 degradation via MDM2-mediated ubiquitination and inhibits SNAI1-induced cell invasion. Interacts (via NICD) with MDM2A. Interacts (via NICD) with BCL6; the interaction decreases MAML1 recruitment by NOTCH1 NICD on target genes DNA and inhibits NOTCH1 transactivation activity. Interacts with THBS4. Interacts (via the EGF-like repeat region) with CCN3 (via CTCK domain). Interacts (via EGF-like domains) with DLL4 (via N-terminal DSL and MNNL domains). Interacts with ZMIZ1. Interacts (via NICD domain) with MEGF10 (via the cytoplasmic domain). Interacts with DLL1 and JAG1. Interacts (via NICD domain) with PRAG1. Forms a complex with PRAG1, N1ICD and MAML1, in a MAML1-dependent manner. Interacts (via transmembrane region) with PSEN1; the interaction is direct. Interacts with ZFP64. Post-translationally, synthesized in the endoplasmic reticulum as an inactive form which is proteolytically cleaved by a furin-like convertase in the trans-Golgi network before it reaches the plasma membrane to yield an active, ligand-accessible form. Cleavage results in a C-terminal fragment N(TM) and a N-terminal fragment N(EC). Following ligand binding, it is cleaved by ADAM17 to yield a membrane-associated intermediate fragment called notch extracellular truncation (NEXT). Following endocytosis, this fragment is then cleaved by one of the catalytic subunits of gamma-secretase (PSEN1 or PSEN2) to release a Notch-derived peptide containing the intracellular domain (NICD) from the membrane. Phosphorylated. In terms of processing, O-glycosylated on the EGF-like domains. O-glucosylated at Ser-435 by KDELC1 and KDELC2. Contains both O-linked fucose and O-linked glucose in the EGF-like domains 11, 12 and 13, which are interacting with the residues on DLL4. O-linked glycosylation by GALNT11 is involved in determination of left/right symmetry: glycosylation promotes activation of NOTCH1, possibly by promoting cleavage by ADAM17, modulating the balance between motile and immotile (sensory) cilia at the left-right organiser (LRO). MFNG-, RFNG- and LFNG-mediated modification of O-fucose residues at specific EGF-like domains results in inhibition of its activation by JAG1 and enhancement of its activation by DLL1 via an increased binding to DLL1. Post-translationally, ubiquitinated. Undergoes 'Lys-29'-linked polyubiquitination by ITCH; promotes the lysosomal degradation of non-activated internalized NOTCH1. Deubiquitination by USP12 is required for transport of internalized non-activated receptor from late endosomes to lysosomes for degradation. Monoubiquitination at Lys-1749 is required for activation by gamma-secretase cleavage, it promotes interaction with AAK1, which stabilizes it. Deubiquitination by EIF3F is necessary for nuclear import of activated Notch. Hydroxylated at Asn-1945 and Asn-2012 by HIF1AN. Hydroxylation reduces affinity for HI1AN and may thus indirectly modulate negative regulation of NICD. Expressed in the brain, kidney and spleen. Expressed in postnatal central nervous system (CNS) germinal zones and, in early postnatal life, within numerous cells throughout the CNS. Found in both subventricular and ventricular germinal zones.

Its subcellular location is the cell membrane. The protein localises to the late endosome membrane. It is found in the nucleus. Functions as a receptor for membrane-bound ligands Jagged-1 (JAG1), Jagged-2 (JAG2) and Delta-1 (DLL1) to regulate cell-fate determination. Upon ligand activation through the released notch intracellular domain (NICD) it forms a transcriptional activator complex with RBPJ/RBPSUH and activates genes of the enhancer of split locus. Affects the implementation of differentiation, proliferation and apoptotic programs. Involved in angiogenesis; negatively regulates endothelial cell proliferation and migration and angiogenic sprouting. Involved in the maturation of both CD4(+) and CD8(+) cells in the thymus. Important for follicular differentiation and possibly cell fate selection within the follicle. During cerebellar development, functions as a receptor for neuronal DNER and is involved in the differentiation of Bergmann glia. Represses neuronal and myogenic differentiation. May play an essential role in postimplantation development, probably in some aspect of cell specification and/or differentiation. May be involved in mesoderm development, somite formation and neurogenesis. May enhance HIF1A function by sequestering HIF1AN away from HIF1A. Required for the THBS4 function in regulating protective astrogenesis from the subventricular zone (SVZ) niche after injury. Involved in determination of left/right symmetry by modulating the balance between motile and immotile (sensory) cilia at the left-right organiser (LRO). In Rattus norvegicus (Rat), this protein is Neurogenic locus notch homolog protein 1 (Notch1).